Consider the following 232-residue polypeptide: Anti-sigma-K factor RskA (232 aa).

The Cytoplasmic portion of the chain corresponds to 1–90; that stretch reads MTEHTDFELL…EVRRQSRWRT (90 aa). The chain crosses the membrane as a helical span at residues 91–111; the sequence is AAFASAAAIAVGLGAFGLGVL. Topologically, residues 112–232 are extracellular; that stretch reads TRPSPPPTVA…GTILAELPLG (121 aa).

The protein belongs to the anti-sigma-K factor family.

Its subcellular location is the cell membrane. Functionally, an anti-sigma factor for extracytoplasmic function (ECF) sigma factor SigK. ECF sigma factors are held in an inactive form by an anti-sigma factor until released by regulated intramembrane proteolysis (RIP). RIP occurs when an extracytoplasmic signal triggers a concerted proteolytic cascade to transmit information and elicit cellular responses. The membrane-spanning regulatory substrate protein is first cut extracytoplasmically (site-1 protease, S1P), then within the membrane itself (site-2 protease, S2P, Rip1), while cytoplasmic proteases finish degrading the regulatory protein, liberating the sigma factor. In Mycobacterium tuberculosis (strain ATCC 25177 / H37Ra), this protein is Anti-sigma-K factor RskA (rskA).